A 364-amino-acid polypeptide reads, in one-letter code: Phosphoserine aminotransferase (364 aa).

Residue Arg-40 participates in L-glutamate binding. Pyridoxal 5'-phosphate is bound by residues 74-75 (GT), Trp-100, Thr-149, Asp-170, and Gln-193. An N6-(pyridoxal phosphate)lysine modification is found at Lys-194. 235-236 (NT) lines the pyridoxal 5'-phosphate pocket.

The protein belongs to the class-V pyridoxal-phosphate-dependent aminotransferase family. SerC subfamily. Homodimer. Pyridoxal 5'-phosphate serves as cofactor. Expressed in ovary and head.

The catalysed reaction is O-phospho-L-serine + 2-oxoglutarate = 3-phosphooxypyruvate + L-glutamate. It catalyses the reaction 4-(phosphooxy)-L-threonine + 2-oxoglutarate = (R)-3-hydroxy-2-oxo-4-phosphooxybutanoate + L-glutamate. The protein operates within amino-acid biosynthesis; L-serine biosynthesis; L-serine from 3-phospho-D-glycerate: step 2/3. Its pathway is cofactor biosynthesis; pyridoxine 5'-phosphate biosynthesis; pyridoxine 5'-phosphate from D-erythrose 4-phosphate: step 3/5. Functionally, catalyzes the reversible conversion of 3-phosphohydroxypyruvate to phosphoserine and of 3-hydroxy-2-oxo-4-phosphonooxybutanoate to phosphohydroxythreonine. The protein is Phosphoserine aminotransferase of Drosophila melanogaster (Fruit fly).